The primary structure comprises 192 residues: Pterin-4-alpha-carbinolamine dehydratase (192 aa).

Belongs to the pterin-4-alpha-carbinolamine dehydratase family.

It carries out the reaction (4aS,6R)-4a-hydroxy-L-erythro-5,6,7,8-tetrahydrobiopterin = (6R)-L-erythro-6,7-dihydrobiopterin + H2O. This chain is Pterin-4-alpha-carbinolamine dehydratase (Pcd), found in Drosophila melanogaster (Fruit fly).